The chain runs to 127 residues: Aspartate 1-decarboxylase (127 aa).

Serine 25 serves as the catalytic Schiff-base intermediate with substrate; via pyruvic acid. Serine 25 carries the pyruvic acid (Ser) modification. Threonine 57 lines the substrate pocket. Tyrosine 58 serves as the catalytic Proton donor. 73-75 (GAA) contributes to the substrate binding site.

The protein belongs to the PanD family. In terms of assembly, heterooctamer of four alpha and four beta subunits. Requires pyruvate as cofactor. Post-translationally, is synthesized initially as an inactive proenzyme, which is activated by self-cleavage at a specific serine bond to produce a beta-subunit with a hydroxyl group at its C-terminus and an alpha-subunit with a pyruvoyl group at its N-terminus.

It localises to the cytoplasm. The enzyme catalyses L-aspartate + H(+) = beta-alanine + CO2. The protein operates within cofactor biosynthesis; (R)-pantothenate biosynthesis; beta-alanine from L-aspartate: step 1/1. Catalyzes the pyruvoyl-dependent decarboxylation of aspartate to produce beta-alanine. The protein is Aspartate 1-decarboxylase of Clostridium acetobutylicum (strain ATCC 824 / DSM 792 / JCM 1419 / IAM 19013 / LMG 5710 / NBRC 13948 / NRRL B-527 / VKM B-1787 / 2291 / W).